The sequence spans 419 residues: Menaquinone reductase, integral membrane subunit (419 aa).

Transmembrane regions (helical) follow at residues 23–43 (LSKF…GLYA), 61–81 (FGFG…AGAF), 98–118 (IINL…LVLV), 143–163 (VIFC…PLIL), 176–196 (AVAH…AFLS), 221–241 (FFIW…SGPV), 270–290 (IAGT…YAWA), 316–336 (LWAE…VPAL), 341–361 (VLFY…RYVM), and 383–403 (WAEW…LSLS).

This sequence belongs to the NrfD family. As to quaternary structure, the Qrc complex is composed of four subunits: QrcA, QrcB, QrcC and QrcD. Can form a supercomplex with the [NiFe] hydrogenase HynA1 and the tetraheme Type I cytochrome c3 TpIc(3), its physiological electron donors.

The protein resides in the cell inner membrane. In terms of biological role, component of the respiratory Qrc complex, that catalyzes the reduction of the menaquinone pool using electrons transferred from the reduced periplasmic cytochrome c3, and which is probably involved in sulfate respiration. Is likely essential for growth on H(2) or formate since the periplasmic hydrogenases and/or formate dehydrogenases act as primary electron donors for the Qrc complex. The QrcD subunit anchors the protein complex to the membrane and likely interacts with the quinone pool. The protein is Menaquinone reductase, integral membrane subunit of Nitratidesulfovibrio vulgaris (strain ATCC 29579 / DSM 644 / CCUG 34227 / NCIMB 8303 / VKM B-1760 / Hildenborough) (Desulfovibrio vulgaris).